Reading from the N-terminus, the 641-residue chain is MSEFSKTPLLDTIRTPADLRKLRIDQVRQVADELRQETIEAVSVTGGHFGAGLGVVELTTAIHYVFDTPRDRLIWDVGHQAYPHKILTGRRDRIRTLRTGGGLSGFTKRTESDYDPFGAAHSSTSISAGLGMAVARDLAGGKNNVIAVIGDGSISAGMAYEAMNNAGAMNSRLIVILNDNNMSIAPPVGAMSAYLSRLYSGKTYRTLREAGKQIGKHLPKLIADRAARAEEYSRGFMMGGGTLFEELGFYYVGPVDGHNLDHLLPILQNVRDADTGPFLIHVVTQKGKGYGPAEAASDKYHAVVKFDIATGAQAKAKSNAPSYQNVFGQSLVKEAQKDDKIVGITAAMPSGTGIDIFEKAFPTRTFDVGIAEQHAVTFAAGLAAEGYKPFCAIYSTFLQRGYDQVVHDVAIQSLPVRFAIDRAGLVGADGATHAGSFDNAFLGCLPNMVIMAASDEAELVHMVATQVAINDRPSAVRYPRGEGRGVEMPEVGIALEIGKGRIVREGNKIALLSFGTRLAECEKAADELATLGLSTTIADARFMKPLDVELVLKLARDHEILLTIEEGSIGGFGSHVMQTLAEHGMLDGEVRMRSLVLPDEFMDHDTPTAMYARAGLDAKGIVKKVFEALGKDAKTDTVKLA.

Residues His79 and 120-122 (AHS) contribute to the thiamine diphosphate site. Asp151 is a Mg(2+) binding site. Thiamine diphosphate-binding positions include 152 to 153 (GS), Asn180, Tyr290, and Glu372. Mg(2+) is bound at residue Asn180.

It belongs to the transketolase family. DXPS subfamily. In terms of assembly, homodimer. Mg(2+) is required as a cofactor. Thiamine diphosphate serves as cofactor.

It catalyses the reaction D-glyceraldehyde 3-phosphate + pyruvate + H(+) = 1-deoxy-D-xylulose 5-phosphate + CO2. It functions in the pathway metabolic intermediate biosynthesis; 1-deoxy-D-xylulose 5-phosphate biosynthesis; 1-deoxy-D-xylulose 5-phosphate from D-glyceraldehyde 3-phosphate and pyruvate: step 1/1. Catalyzes the acyloin condensation reaction between C atoms 2 and 3 of pyruvate and glyceraldehyde 3-phosphate to yield 1-deoxy-D-xylulose-5-phosphate (DXP). The chain is 1-deoxy-D-xylulose-5-phosphate synthase from Rhodopseudomonas palustris (strain BisB18).